Reading from the N-terminus, the 324-residue chain is Ribose-phosphate pyrophosphokinase (324 aa).

ATP is bound by residues Asn-45 to Glu-47 and Arg-104 to Gln-105. Positions 138 and 178 each coordinate Mg(2+). Lys-201 is a catalytic residue. D-ribose 5-phosphate is bound by residues Arg-203, Asp-229, and Asp-233–Thr-237.

This sequence belongs to the ribose-phosphate pyrophosphokinase family. Class I subfamily. Homohexamer. Mg(2+) serves as cofactor.

Its subcellular location is the cytoplasm. The catalysed reaction is D-ribose 5-phosphate + ATP = 5-phospho-alpha-D-ribose 1-diphosphate + AMP + H(+). It functions in the pathway metabolic intermediate biosynthesis; 5-phospho-alpha-D-ribose 1-diphosphate biosynthesis; 5-phospho-alpha-D-ribose 1-diphosphate from D-ribose 5-phosphate (route I): step 1/1. Its function is as follows. Involved in the biosynthesis of the central metabolite phospho-alpha-D-ribosyl-1-pyrophosphate (PRPP) via the transfer of pyrophosphoryl group from ATP to 1-hydroxyl of ribose-5-phosphate (Rib-5-P). The polypeptide is Ribose-phosphate pyrophosphokinase (Streptomyces avermitilis (strain ATCC 31267 / DSM 46492 / JCM 5070 / NBRC 14893 / NCIMB 12804 / NRRL 8165 / MA-4680)).